Consider the following 708-residue polypeptide: Leukotoxin translocation ATP-binding protein LktB (708 aa).

Residues 1–126 enclose the Peptidase C39 domain; sequence MEANHQRNDL…ACYQGQLILV (126 aa). An ABC transmembrane type-1 domain is found at 155 to 437; that stretch reads FLETLIVSIF…LAQLWQDFQQ (283 aa). 5 helical membrane passes run 159–179, 192–212, 270–290, 296–316, and 389–409; these read LIVS…FQVV, LNII…LSGL, ALTS…MWYY, LVIL…SPIL, and VMVI…LSIG. The region spanning 469 to 704 is the ABC transporter domain; the sequence is ISFKNIRFRY…SNGLYSYLHQ (236 aa). 503–510 provides a ligand contact to ATP; sequence GRSGSGKS.

Belongs to the ABC transporter superfamily. Protein-1 exporter (TC 3.A.1.109) family. Homodimer.

The protein resides in the cell inner membrane. The enzyme catalyses ATP + H2O + proteinSide 1 = ADP + phosphate + proteinSide 2.. Functionally, part of the ABC transporter complex LktBD involved in leukotoxin export. Transmembrane domains (TMD) form a pore in the inner membrane and the ATP-binding domain (NBD) is responsible for energy generation. The polypeptide is Leukotoxin translocation ATP-binding protein LktB (lktB) (Mannheimia haemolytica (Pasteurella haemolytica)).